The following is a 271-amino-acid chain: Formamidopyrimidine-DNA glycosylase (271 aa).

The Schiff-base intermediate with DNA role is filled by proline 2. The active-site Proton donor is the glutamate 3. The active-site Proton donor; for beta-elimination activity is lysine 58. Residues histidine 91, arginine 110, and arginine 152 each contribute to the DNA site. The segment at 237–271 (RVYGRTGLACMACETPVKQIVQGNRSTYYCPACQR) adopts an FPG-type zinc-finger fold. Residue arginine 261 is the Proton donor; for delta-elimination activity of the active site.

Belongs to the FPG family. As to quaternary structure, monomer. Requires Zn(2+) as cofactor.

The enzyme catalyses Hydrolysis of DNA containing ring-opened 7-methylguanine residues, releasing 2,6-diamino-4-hydroxy-5-(N-methyl)formamidopyrimidine.. It carries out the reaction 2'-deoxyribonucleotide-(2'-deoxyribose 5'-phosphate)-2'-deoxyribonucleotide-DNA = a 3'-end 2'-deoxyribonucleotide-(2,3-dehydro-2,3-deoxyribose 5'-phosphate)-DNA + a 5'-end 5'-phospho-2'-deoxyribonucleoside-DNA + H(+). In terms of biological role, involved in base excision repair of DNA damaged by oxidation or by mutagenic agents. Acts as a DNA glycosylase that recognizes and removes damaged bases. Has a preference for oxidized purines, such as 7,8-dihydro-8-oxoguanine (8-oxoG). Has AP (apurinic/apyrimidinic) lyase activity and introduces nicks in the DNA strand. Cleaves the DNA backbone by beta-delta elimination to generate a single-strand break at the site of the removed base with both 3'- and 5'-phosphates. The sequence is that of Formamidopyrimidine-DNA glycosylase from Thioalkalivibrio sulfidiphilus (strain HL-EbGR7).